We begin with the raw amino-acid sequence, 418 residues long: MSKVEFNKETGPREVFCGLTSIVWLHRRMPDAFFLVVGSRTCAHLIQSAAGVMIFAEPRFGTAILEEKDLAGLADAHEELDRVVNDLISRRPEIKTLFLVGSCPSEVIKLDLATVAEKLNKRFLGKIKFVNYSGSGIETTFTQGEDGALKALIPLMEDSNEEKLLLVGTLANNVEDRFKKIFRNLGISNVESFPPRQSTELPKIGKNTKVLLTQPYLSDTVRDLKHRGCEIISAPFPLGIEGSTKWFLAAAKAFKISALKVHEIISPLISRAKLALESHKDILKGKRLFLLPESQLEISLARFLHNECEMDLIEIGTPYLNKDLMKEEINLLPDNTKIVEGQHVEKQLDRVREANPDLVVCGMGLANPLEAEGISTKWSIEMVFSPIHGIDQAADLAGLFSKPLRRNQILTSKTLVTN.

[4Fe-4S] cluster contacts are provided by Cys-17, Cys-42, and Cys-103.

This sequence belongs to the BchN/ChlN family. Protochlorophyllide reductase is composed of three subunits; ChlL, ChlN and ChlB. Forms a heterotetramer of two ChlB and two ChlN subunits. It depends on [4Fe-4S] cluster as a cofactor.

It carries out the reaction chlorophyllide a + oxidized 2[4Fe-4S]-[ferredoxin] + 2 ADP + 2 phosphate = protochlorophyllide a + reduced 2[4Fe-4S]-[ferredoxin] + 2 ATP + 2 H2O. The protein operates within porphyrin-containing compound metabolism; chlorophyll biosynthesis (light-independent). In terms of biological role, component of the dark-operative protochlorophyllide reductase (DPOR) that uses Mg-ATP and reduced ferredoxin to reduce ring D of protochlorophyllide (Pchlide) to form chlorophyllide a (Chlide). This reaction is light-independent. The NB-protein (ChlN-ChlB) is the catalytic component of the complex. The protein is Light-independent protochlorophyllide reductase subunit N of Prochlorococcus marinus (strain MIT 9215).